Reading from the N-terminus, the 219-residue chain is Flagellin A (219 aa).

Residues 1–12 (MKVKEFMNNKKG) constitute a propeptide that is removed on maturation. N-linked (GlcNAc...) asparagine glycans are attached at residues asparagine 38 and asparagine 175.

It belongs to the archaeal flagellin family. In terms of processing, N-linked glycans consist of the 779 Da trisaccharide beta-ManNAc(Thr)-(1-4)-beta-GlcNAc3NAcA-(1-3)-beta-GlcNAc.

It is found in the archaeal flagellum. Functionally, flagellin is the subunit protein which polymerizes to form the filaments of archaeal flagella. The chain is Flagellin A (flaA) from Methanococcus voltae.